The chain runs to 39 residues: Histone H2A (39 aa).

The span at 1–18 (AGRGKQGGKVRAKAKTRS) shows a compositional bias: basic residues. Residues 1–24 (AGRGKQGGKVRAKAKTRSSRAGLQ) are disordered. N6-(2-hydroxyisobutyryl)lysine is present on Lys5. Lys5 carries the N6-acetyllysine modification. Lys9 is modified (N6-(2-hydroxyisobutyryl)lysine; alternate). Lys9 bears the N6-lactoyllysine; alternate mark. Lys9 bears the N6-succinyllysine mark. Residues Lys13 and Lys15 each participate in a glycyl lysine isopeptide (Lys-Gly) (interchain with G-Cter in ubiquitin) cross-link. Lys36 carries the N6-(2-hydroxyisobutyryl)lysine; alternate modification.

It belongs to the histone H2A family. As to quaternary structure, the nucleosome is a histone octamer containing two molecules each of H2A, H2B, H3 and H4 assembled in one H3-H4 heterotetramer and two H2A-H2B heterodimers. The octamer wraps approximately 147 bp of DNA. Monoubiquitination of C-terminus gives a specific tag for epigenetic transcriptional repression. Following DNA double-strand breaks (DSBs), it is ubiquitinated through 'Lys-63' linkage of ubiquitin moieties.

The protein resides in the nucleus. Its subcellular location is the chromosome. Its function is as follows. Core component of nucleosome. Nucleosomes wrap and compact DNA into chromatin, limiting DNA accessibility to the cellular machineries which require DNA as a template. Histones thereby play a central role in transcription regulation, DNA repair, DNA replication and chromosomal stability. DNA accessibility is regulated via a complex set of post-translational modifications of histones, also called histone code, and nucleosome remodeling. Functionally, buforins are strong antimicrobial activities in vitro against a broad-spectrum of microorganisms including fungi. Buforin II is more potent than buforin I. This is Histone H2A from Bufo gargarizans (Asian toad).